A 475-amino-acid chain; its full sequence is CAAX prenyl protease 1 homolog (475 aa).

At 1–18 the chain is on the lumenal side; sequence MGMWASVDAMWDFPAEKR. A helical transmembrane segment spans residues 19-39; the sequence is IFGAVLLFSWTVYLWETFLAQ. Topologically, residues 40–81 are nuclear; the sequence is RQRRIYKTTTRVPAELEQIMDSDTFEKSRLYQLDKSTFSFWS. The chain crosses the membrane as a helical span at residues 82–102; it reads GLYSEVEGTFILLFGGIPYLW. The Lumenal portion of the chain corresponds to 103–123; sequence RLSGQFCSSAGFGPEYEIIQS. A helical membrane pass occupies residues 124 to 144; sequence LVFLLLATLFSALTGLPWSLY. Topologically, residues 145 to 170 are nuclear; it reads NTFVIEEKHGFNHQTLEFFMKDAIKK. The helical transmembrane segment at 171–191 threads the bilayer; the sequence is FIVTQCILLPVSALLLYIIKI. Residues 192 to 195 are Lumenal-facing; sequence GGDY. The chain crosses the membrane as a helical span at residues 196 to 216; it reads FFIYAWLFTLVVSLVLVTIYA. The Nuclear portion of the chain corresponds to 217–347; the sequence is DYIAPLFDKF…GHWKLGHTVK (131 aa). Residues 293-314 are disordered; it reads DNQEESGMEARNEGEGDSEEVK. A compositionally biased stretch (basic and acidic residues) spans 300-314; it reads MEARNEGEGDSEEVK. Histidine 335 provides a ligand contact to Zn(2+). Residue glutamate 336 is part of the active site. A Zn(2+)-binding site is contributed by histidine 339. Residues 348 to 368 traverse the membrane as a helical segment; sequence NIIISQMNSFLCFFLFAVLIG. The Lumenal portion of the chain corresponds to 369 to 382; that stretch reads RRELFAAFGFYDSQ. A helical transmembrane segment spans residues 383-405; sequence PTLIGLLIIFQFIFSPYNEVLSF. The Nuclear segment spans residues 406-475; it reads CLTVLSRRFE…LQALKNAKQD (70 aa). Glutamate 415 lines the Zn(2+) pocket.

This sequence belongs to the peptidase M48A family. Requires Zn(2+) as cofactor.

The protein localises to the endoplasmic reticulum membrane. It localises to the nucleus inner membrane. Its subcellular location is the early endosome membrane. The protein resides in the late endosome membrane. The enzyme catalyses Hydrolyzes the peptide bond -P2-(S-farnesyl or geranylgeranyl)C-P1'-P2'-P3'-COOH where P1' and P2' are amino acids with aliphatic side chains and P3' is any C-terminal residue.. Its activity is regulated as follows. Inhibited by HIV protease inhibitors, such as lopinavir, tipranavir and nelfinavir, leading to defects in lamin A/LMNA maturation and accumulation of prelamin-A/C precursors in cells. This causes defects in nuclear envelope integrity and release of DNA in the cytosol, activating the AIM2 inflammasome. Transmembrane metalloprotease whose catalytic activity is critical for processing lamin A/LMNA on the inner nuclear membrane and clearing clogged translocons on the endoplasmic reticulum. Proteolytically removes the C-terminal three residues of farnesylated proteins. Also plays an antiviral role independently of its protease activity by restricting enveloped RNA and DNA viruses. Mechanistically, controls IFITM antiviral pathway to hinder viruses from breaching the endosomal barrier by modulating membrane fluidity. In Mus musculus (Mouse), this protein is CAAX prenyl protease 1 homolog.